Reading from the N-terminus, the 124-residue chain is Small ribosomal subunit protein uS12 (124 aa).

A disordered region spans residues 1–28 (MPTIQQLIRTERQSSKAKTKSPALKSCP). D89 carries the post-translational modification 3-methylthioaspartic acid. Positions 104-124 (TAGVKDRRQSRSKYGAKTPKE) are disordered.

It belongs to the universal ribosomal protein uS12 family. Part of the 30S ribosomal subunit. Contacts proteins S8 and S17. May interact with IF1 in the 30S initiation complex.

In terms of biological role, with S4 and S5 plays an important role in translational accuracy. Functionally, interacts with and stabilizes bases of the 16S rRNA that are involved in tRNA selection in the A site and with the mRNA backbone. Located at the interface of the 30S and 50S subunits, it traverses the body of the 30S subunit contacting proteins on the other side and probably holding the rRNA structure together. The combined cluster of proteins S8, S12 and S17 appears to hold together the shoulder and platform of the 30S subunit. In Synechococcus sp. (strain WH7803), this protein is Small ribosomal subunit protein uS12.